The primary structure comprises 412 residues: Serine hydroxymethyltransferase (412 aa).

(6S)-5,6,7,8-tetrahydrofolate is bound by residues L117 and 121–123 (GHL). K226 is modified (N6-(pyridoxal phosphate)lysine).

This sequence belongs to the SHMT family. As to quaternary structure, homodimer. Pyridoxal 5'-phosphate is required as a cofactor.

The protein localises to the cytoplasm. The enzyme catalyses (6R)-5,10-methylene-5,6,7,8-tetrahydrofolate + glycine + H2O = (6S)-5,6,7,8-tetrahydrofolate + L-serine. It functions in the pathway one-carbon metabolism; tetrahydrofolate interconversion. The protein operates within amino-acid biosynthesis; glycine biosynthesis; glycine from L-serine: step 1/1. Its function is as follows. Catalyzes the reversible interconversion of serine and glycine with tetrahydrofolate (THF) serving as the one-carbon carrier. This reaction serves as the major source of one-carbon groups required for the biosynthesis of purines, thymidylate, methionine, and other important biomolecules. Also exhibits THF-independent aldolase activity toward beta-hydroxyamino acids, producing glycine and aldehydes, via a retro-aldol mechanism. This chain is Serine hydroxymethyltransferase, found in Natranaerobius thermophilus (strain ATCC BAA-1301 / DSM 18059 / JW/NM-WN-LF).